The primary structure comprises 176 residues: NAD(P)H-quinone oxidoreductase subunit I, chloroplastic (176 aa).

2 consecutive 4Fe-4S ferredoxin-type domains span residues 55 to 84 (GRIH…VNWE) and 95 to 124 (QTYS…MTEE). [4Fe-4S] cluster is bound by residues C64, C67, C70, C74, C104, C107, C110, and C114.

Belongs to the complex I 23 kDa subunit family. In terms of assembly, NDH is composed of at least 16 different subunits, 5 of which are encoded in the nucleus. [4Fe-4S] cluster is required as a cofactor.

Its subcellular location is the plastid. The protein resides in the chloroplast thylakoid membrane. It carries out the reaction a plastoquinone + NADH + (n+1) H(+)(in) = a plastoquinol + NAD(+) + n H(+)(out). The catalysed reaction is a plastoquinone + NADPH + (n+1) H(+)(in) = a plastoquinol + NADP(+) + n H(+)(out). Its function is as follows. NDH shuttles electrons from NAD(P)H:plastoquinone, via FMN and iron-sulfur (Fe-S) centers, to quinones in the photosynthetic chain and possibly in a chloroplast respiratory chain. The immediate electron acceptor for the enzyme in this species is believed to be plastoquinone. Couples the redox reaction to proton translocation, and thus conserves the redox energy in a proton gradient. The protein is NAD(P)H-quinone oxidoreductase subunit I, chloroplastic of Mesostigma viride (Green alga).